Reading from the N-terminus, the 63-residue chain is Cysteine-rich venom protein 3 (63 aa).

An N-terminal signal peptide occupies residues 1-25 (MRKPITLILVVALALVLLATSEVSA). 3 disulfides stabilise this stretch: Cys29–Cys43, Cys36–Cys48, and Cys42–Cys58.

In terms of tissue distribution, expressed by the venom gland.

It is found in the secreted. The protein is Cysteine-rich venom protein 3 of Pimpla hypochondriaca (Parasitoid wasp).